Consider the following 248-residue polypeptide: MKRVSVKNYLVCLLIAVCAIFVFPANASAMHIMEGYLAPGWCISWGVMCMPFLVIGFFSIKKKIEVSSKNLTLLAMCGAFAFVLSALKMPSVTGSCSHPTGVGLGAVLFGPTAMSVIGAIILLFQAILLAHGGITTLGANVFSMAIVGPLVSFGVFKLSKRWGAKAGLAVFLAVFFGDLMTYVITSVELAMAYPDATGSFMVSLGKFISIFGFTQVPLAVCEGLLTVVIYNVLAKYSAKELKALSAIY.

The first 29 residues, 1-29, serve as a signal peptide directing secretion; it reads MKRVSVKNYLVCLLIAVCAIFVFPANASA. 6 helical membrane-spanning segments follow: residues 40 to 60, 72 to 92, 104 to 124, 136 to 156, 167 to 187, and 210 to 230; these read GWCI…FFSI, TLLA…MPSV, LGAV…ILLF, TLGA…FGVF, GLAV…ITSV, and IFGF…VVIY.

The protein belongs to the CbiM family. Forms an energy-coupling factor (ECF) transporter complex composed of an ATP-binding protein (A component, CbiO), a transmembrane protein (T component, CbiQ) and 2 possible substrate-capture proteins (S components, CbiM and CbiN) of unknown stoichimetry.

Its subcellular location is the cell membrane. The protein operates within cofactor biosynthesis; adenosylcobalamin biosynthesis. In terms of biological role, part of the energy-coupling factor (ECF) transporter complex CbiMNOQ involved in cobalt import. This chain is Cobalt transport protein CbiM, found in Ruminiclostridium cellulolyticum (strain ATCC 35319 / DSM 5812 / JCM 6584 / H10) (Clostridium cellulolyticum).